A 382-amino-acid chain; its full sequence is MKKQIAILGSTGSIGTQALQVIEEHPDLYEVYALTANNRVDLLVEQARKFMPEAVVIANEEKYLQLKEALSDLPVKVYAGADALSQIVESQPIDIVLASMVGYAGLRPTINAIKAGKAIALANKETLVVAGELINALANQYHTPVLPVDSEHSAIFQCLEINNRLEKVILTASGGPFRTYTMEQLQTVTKAQALKHPNWEMGAKITIDSASMMNKGFEVIEAKWLFGMRPEQIEVVVHPQSVIHSMVQFEDGAVKAQLGMPDMRLPIQYAFSYPERVKSSFERLDFARITDLTFEQPDTKRFRNLALAYEALYRAGNMPCIVNAANEVVVDAFLKDKISFLGMSDVIEQTMGKVAYIKEPTYEDYVDTDAEARRVALSLLSS.

Thr11, Gly12, Ser13, Ile14, and Asn123 together coordinate NADPH. Lys124 provides a ligand contact to 1-deoxy-D-xylulose 5-phosphate. Glu125 is an NADPH binding site. Asp149 contributes to the Mn(2+) binding site. Residues Ser150, Glu151, Ser173, and His196 each contribute to the 1-deoxy-D-xylulose 5-phosphate site. Glu151 contributes to the Mn(2+) binding site. NADPH is bound at residue Gly202. 1-deoxy-D-xylulose 5-phosphate is bound by residues Ser209, Asn214, Lys215, and Glu218. Residue Glu218 participates in Mn(2+) binding.

It belongs to the DXR family. The cofactor is Mg(2+). Requires Mn(2+) as cofactor.

It catalyses the reaction 2-C-methyl-D-erythritol 4-phosphate + NADP(+) = 1-deoxy-D-xylulose 5-phosphate + NADPH + H(+). Its pathway is isoprenoid biosynthesis; isopentenyl diphosphate biosynthesis via DXP pathway; isopentenyl diphosphate from 1-deoxy-D-xylulose 5-phosphate: step 1/6. In terms of biological role, catalyzes the NADPH-dependent rearrangement and reduction of 1-deoxy-D-xylulose-5-phosphate (DXP) to 2-C-methyl-D-erythritol 4-phosphate (MEP). This Phocaeicola vulgatus (strain ATCC 8482 / DSM 1447 / JCM 5826 / CCUG 4940 / NBRC 14291 / NCTC 11154) (Bacteroides vulgatus) protein is 1-deoxy-D-xylulose 5-phosphate reductoisomerase.